Here is a 122-residue protein sequence, read N- to C-terminus: Fluoride-specific ion channel FluC (122 aa).

4 helical membrane-spanning segments follow: residues 6–26 (LVVG…INLV), 33–53 (SISL…GLLF), 60–80 (GLSP…FTTF), and 101–121 (LNII…FIIF). Glycine 75 and threonine 78 together coordinate Na(+).

Belongs to the fluoride channel Fluc/FEX (TC 1.A.43) family.

Its subcellular location is the cell inner membrane. It carries out the reaction fluoride(in) = fluoride(out). Its activity is regulated as follows. Na(+) is not transported, but it plays an essential structural role and its presence is essential for fluoride channel function. Fluoride-specific ion channel. Important for reducing fluoride concentration in the cell, thus reducing its toxicity. The polypeptide is Fluoride-specific ion channel FluC (Campylobacter jejuni subsp. jejuni serotype O:6 (strain 81116 / NCTC 11828)).